We begin with the raw amino-acid sequence, 193 residues long: Transcriptional regulator RamR (193 aa).

In terms of domain architecture, HTH tetR-type spans 7–66 (EDKKQALLEAATQAIAQSGIAASTAVIARNAGVAEGTLFRYFATKDELINTLYLHLKQDL). Residues 29–48 (STAVIARNAGVAEGTLFRYF) constitute a DNA-binding region (H-T-H motif).

As to quaternary structure, homodimer. May bind DNA either as a homodimer or as a pair of homodimers. Various chemicals reduce DNA-binding in vitro, including bile acids, such as cholic and chenodeoxycholic acids, and antimicrobial drugs, such as berberine, crystal violet, dequalinium, ethidium bromide and rhodamine 6G. Binds small regulatory RNA StyR3.

In terms of biological role, transcriptional regulator. Represses the transcription of the transcriptional activator RamA and, thereby, leads to repression of the expression of the efflux pump subunits AcrA and AcrB, and TolC. Acts by binding directly to the promoter region of the ramA gene. Promoter binding may be inhibited partially by the small regulatory RNA StyR3, perhaps thereby ensuring a basal level of expression of RamA. This is Transcriptional regulator RamR from Salmonella typhimurium (strain LT2 / SGSC1412 / ATCC 700720).